We begin with the raw amino-acid sequence, 197 residues long: Holliday junction branch migration complex subunit RuvA (197 aa).

The segment at 1-64 is domain I; that stretch reads MYEYIKGKYI…EDFIGVYGFL (64 aa). A domain II region spans residues 65–144; that stretch reads TKDELSMFKL…DILEEDDEQI (80 aa). The tract at residues 145–149 is flexible linker; the sequence is INKVA. Residues 149–197 form a domain III region; the sequence is ADDKKVLEAVAALVTLGYSEKEANKVINSCDKNNSLEQIIKEALKYLMK.

It belongs to the RuvA family. Homotetramer. Forms an RuvA(8)-RuvB(12)-Holliday junction (HJ) complex. HJ DNA is sandwiched between 2 RuvA tetramers; dsDNA enters through RuvA and exits via RuvB. An RuvB hexamer assembles on each DNA strand where it exits the tetramer. Each RuvB hexamer is contacted by two RuvA subunits (via domain III) on 2 adjacent RuvB subunits; this complex drives branch migration. In the full resolvosome a probable DNA-RuvA(4)-RuvB(12)-RuvC(2) complex forms which resolves the HJ.

Its subcellular location is the cytoplasm. In terms of biological role, the RuvA-RuvB-RuvC complex processes Holliday junction (HJ) DNA during genetic recombination and DNA repair, while the RuvA-RuvB complex plays an important role in the rescue of blocked DNA replication forks via replication fork reversal (RFR). RuvA specifically binds to HJ cruciform DNA, conferring on it an open structure. The RuvB hexamer acts as an ATP-dependent pump, pulling dsDNA into and through the RuvAB complex. HJ branch migration allows RuvC to scan DNA until it finds its consensus sequence, where it cleaves and resolves the cruciform DNA. The polypeptide is Holliday junction branch migration complex subunit RuvA (Clostridium botulinum (strain ATCC 19397 / Type A)).